Reading from the N-terminus, the 794-residue chain is Glutamine--tRNA ligase (794 aa).

A disordered region spans residues aspartate 192–glutamate 217. The 'HIGH' region signature appears at proline 277 to histidine 287. ATP contacts are provided by residues glutamate 278 to asparagine 280 and histidine 284 to alanine 290. Aspartate 310 and tyrosine 450 together coordinate L-glutamine. Residues threonine 469, arginine 498–leucine 499, and methionine 506–lysine 508 each bind ATP. Residues valine 505–arginine 509 carry the 'KMSKS' region motif.

Belongs to the class-I aminoacyl-tRNA synthetase family.

It catalyses the reaction tRNA(Gln) + L-glutamine + ATP = L-glutaminyl-tRNA(Gln) + AMP + diphosphate. The polypeptide is Glutamine--tRNA ligase (Lupinus luteus (European yellow lupine)).